Here is a 290-residue protein sequence, read N- to C-terminus: Putative tyrosine recombinase TTE1313 (290 aa).

The 85-residue stretch at 1–85 (MAESVVGEFL…SIKAFYHYLF (85 aa)) folds into the Core-binding (CB) domain. In terms of domain architecture, Tyr recombinase spans 106–290 (KEPVTLTVEQ…EVYNKFHPRA (185 aa)). Arginine 239 is a catalytic residue. Tyrosine 283 acts as the O-(3'-phospho-DNA)-tyrosine intermediate in catalysis.

Belongs to the 'phage' integrase family.

It localises to the cytoplasm. In terms of biological role, site-specific tyrosine recombinase, which acts by catalyzing the cutting and rejoining of the recombining DNA molecules. The protein is Putative tyrosine recombinase TTE1313 of Caldanaerobacter subterraneus subsp. tengcongensis (strain DSM 15242 / JCM 11007 / NBRC 100824 / MB4) (Thermoanaerobacter tengcongensis).